The chain runs to 355 residues: METATTLEIASCSQRQVEAAADPADAKGPRTSHQQEAGSPSLQLLPSIEEHPKIWLPRALKQTYIRKAGETVNLLIPIQGKPKPQTTWTHNGCALDSSRVSVRNGEHDSILFIREAQRTDSGCYQLCVQLGGLQATATINILVIEKPGPPQSIKLVDVWGANATLEWTPPQDTGNTALLGYTVQKADKKSGLWFTVLERYHRTSCVVSNLIVGNSYAFRVFAENQCGLSDTAPVTADLAHIQKAATVYKAKGFAQRDLSEAPKFTQPLADCTTVTGYDTQLFCCVRASPRPKIIWLKNKMDLQGNPKYRALSQLGICSLEIRKPSPFDGGIYTCKAINALGEASVDCRVDVKAPH.

2 stretches are compositionally biased toward polar residues: residues 1-16 (META…SQRQ) and 31-41 (TSHQQEAGSPS). Residues 1–41 (METATTLEIASCSQRQVEAAADPADAKGPRTSHQQEAGSPS) form a disordered region. A Phosphoserine modification is found at Ser-39. The Ig-like C2-type 1 domain maps to 46-140 (PSIEEHPKIW…GGLQATATIN (95 aa)). The 96-residue stretch at 149 to 244 (PPQSIKLVDV…TADLAHIQKA (96 aa)) folds into the Fibronectin type-III domain. The region spanning 262–346 (PKFTQPLADC…INALGEASVD (85 aa)) is the Ig-like C2-type 2 domain. Cys-283 and Cys-334 are disulfide-bonded. Arg-322 carries the post-translational modification Omega-N-methylarginine.

Belongs to the immunoglobulin superfamily. MyBP family. As to expression, expressed in the atria as well as in discrete puncta throughout the right ventricular wall and septum.

The protein localises to the cytoplasm. The protein resides in the myofibril. It is found in the sarcomere. Its function is as follows. Myosin-binding protein which plays a role in cardiac function. Seems to regulate conduction in the atria and ventricular conduction systems. In Mus musculus (Mouse), this protein is Myosin-binding protein H-like.